Here is a 906-residue protein sequence, read N- to C-terminus: Interference hedgehog (906 aa).

Positions 1 to 20 (MSPLTSSLLLFSLLTSSLEA) are cleaved as a signal peptide. Residues 21-715 (IPVLQPSFPP…SHNETVSMSP (695 aa)) lie on the Extracellular side of the membrane. Ig-like C2-type domains lie at 39–144 (PGVR…TARL), 134–236 (PLVV…ISSS), 252–341 (PHLL…INVT), and 346–433 (PRIT…LQVN). Cys-62 and Cys-128 are oxidised to a cystine. N-linked (GlcNAc...) asparagine glycosylation is found at Asn-85, Asn-104, Asn-148, and Asn-209. 2 disulfides stabilise this stretch: Cys-173–Cys-220 and Cys-276–Cys-324. Asn-339 and Asn-388 each carry an N-linked (GlcNAc...) asparagine glycan. Cys-367 and Cys-415 are disulfide-bonded. Polar residues predominate over residues 427 to 439 (GTLLQVNPKQIQS). Positions 427–476 (GTLLQVNPKQIQSEPRETGSGGGFGSHRSMKPVNHGQKPTKMIPPSPPNV) are disordered. Fibronectin type-III domains lie at 470-578 (PPSP…LQPG) and 586-681 (VPEL…TQRP). Asn-475 carries an N-linked (GlcNAc...) asparagine glycan. Heparin-binding residues include Arg-506, Lys-512, Lys-514, and Arg-552. N-linked (GlcNAc...) asparagine glycosylation occurs at Asn-568. The interval 673-713 (LKQGRTQRPRASTTEEPTIQGIGDRDTTSHNQPSHNETVSM) is disordered. Polar residues-rich tracts occupy residues 676–689 (GRTQRPRASTTEEP) and 701–713 (SHNQPSHNETVSM). A helical membrane pass occupies residues 716–736 (MLTGTIGGGALLLILLVSAFL). At 737–906 (CMCRRRSPRG…SSGSLNSVGV (170 aa)) the chain is on the cytoplasmic side. The segment at 789-906 (AQQQQQQLDE…SSGSLNSVGV (118 aa)) is disordered. Composition is skewed to low complexity over residues 854–866 (GNNNNLNQSSEAG) and 890–906 (SSRSENLSSGSLNSVGV).

The protein belongs to the immunoglobulin superfamily. IHOG family. As to quaternary structure, homodimer. Heterotetramer; 2 iHog chains bind 2 hh chains when facilitated by heparin, heparin is required to promote high-affinity interactions between hh and iHog.

The protein localises to the membrane. Functionally, mediates response to the active Hedgehog (Hh) protein signal in embryos, functioning upstream or at the level of patched (ptc). This chain is Interference hedgehog, found in Drosophila persimilis (Fruit fly).